The sequence spans 235 residues: Kinetochore protein Spc25 (235 aa).

Positions 44-106 (KNILSAKEAI…DMEAQLLRHT (63 aa)) form a coiled coil. The disordered stretch occupies residues 193-216 (EVAGASPVTPSGSERPKATSKHSN).

Belongs to the SPC25 family. Component of the Ndc80 complex, which is composed of Ndc80, Nuf2 and Spc25.

It is found in the nucleus. Its subcellular location is the chromosome. It localises to the centromere. The protein resides in the kinetochore. In terms of biological role, acts as a component of the essential kinetochore-associated Ndc80 complex, which is required for chromosome segregation and spindle checkpoint activity during meiosis and mitosis. Required for kinetochore integrity and the organization of stable microtubule binding sites in the outer plate of the kinetochore. Participates in SAC signaling that responds specifically to disruptions in spindle microtubule dynamics. The NDC80 complex synergistically enhances the affinity of the SKA1 complex for microtubules and may allow the NDC80 complex to track depolymerizing microtubules. The protein is Kinetochore protein Spc25 of Drosophila pseudoobscura pseudoobscura (Fruit fly).